We begin with the raw amino-acid sequence, 1030 residues long: MMS19 nucleotide excision repair protein homolog (1030 aa).

N-acetylalanine is present on A2. K496 carries the N6-acetyllysine modification. 4 HEAT repeats span residues 866–904, 908–946, 949–987, and 990–1028; these read QRFF…RLPK, LPEL…EAPQ, SLHV…LPTP, and LPYK…LGSP. Residue S1027 is modified to Phosphoserine.

It belongs to the MET18/MMS19 family. As to quaternary structure, component of the CIA complex. In the CIA complex, interacts directly with CIAO2B and CIAO3. Component of the MMXD complex, composed of CIAO1, ERCC2, CIAO2B, MMS19 and SLC25A5. Interacts with CIAO2B; the interaction is direct. Interacts with ERCC2/XPD; the interaction is direct. Interacts with ERCC3/XPB and NCOA3/RAC3. Interacts with RTEL1; the interaction mediates the association of RTEL1 with the CIA complex. Interacts with BRIP1. Interacts with KIF4A; the interaction facilitates the transfer of Fe-S clusters to KIF4A to ensure proper localization of KIF4A to the mitotic machinery components. Interacts with CCDC117; the interaction is indirect. Ubiquitinated; undergoes 'Lys-48'-linked polyubiquitination by MAGEF1-NSMCE1 ubiquitin ligase complex leading to proteasomal degradation. Ubiquitously expressed with higher expression in testis.

It localises to the nucleus. The protein resides in the cytoplasm. The protein localises to the cytoskeleton. It is found in the spindle. Its subcellular location is the microtubule organizing center. It localises to the centrosome. Key component of the cytosolic iron-sulfur protein assembly (CIA) complex, a multiprotein complex that mediates the incorporation of iron-sulfur cluster into apoproteins specifically involved in DNA metabolism and genomic integrity. In the CIA complex, MMS19 acts as an adapter between early-acting CIA components and a subset of cellular target iron-sulfur proteins such as ERCC2/XPD, FANCJ and RTEL1, thereby playing a key role in nucleotide excision repair (NER), homologous recombination-mediated double-strand break DNA repair, DNA replication and RNA polymerase II (POL II) transcription. As part of the mitotic spindle-associated MMXD complex, plays a role in chromosome segregation, probably by facilitating iron-sulfur (Fe-S) cluster assembly into ERCC2/XPD. Together with CIAO2, facilitates the transfer of Fe-S clusters to the motor protein KIF4A, which ensures proper localization of KIF4A to mitotic machinery components to promote the progression of mitosis. Indirectly acts as a transcriptional coactivator of estrogen receptor (ER), via its role in iron-sulfur insertion into some component of the TFIIH-machinery. This is MMS19 nucleotide excision repair protein homolog from Homo sapiens (Human).